We begin with the raw amino-acid sequence, 465 residues long: Glutamate--tRNA ligase (465 aa).

The 'HIGH' region signature appears at 11 to 21 (PSPTGFIHLGN). Residues 118 to 139 (GEKPRYDGTWRPAPGKILPPPP) form a disordered region. The short motif at 243-247 (KMSKR) is the 'KMSKS' region element. Lysine 246 contacts ATP.

It belongs to the class-I aminoacyl-tRNA synthetase family. Glutamate--tRNA ligase type 1 subfamily. Monomer.

It is found in the cytoplasm. The enzyme catalyses tRNA(Glu) + L-glutamate + ATP = L-glutamyl-tRNA(Glu) + AMP + diphosphate. Its function is as follows. Catalyzes the attachment of glutamate to tRNA(Glu) in a two-step reaction: glutamate is first activated by ATP to form Glu-AMP and then transferred to the acceptor end of tRNA(Glu). The sequence is that of Glutamate--tRNA ligase from Ralstonia pickettii (strain 12J).